A 154-amino-acid polypeptide reads, in one-letter code: Large ribosomal subunit protein uL13 (154 aa).

The segment at 131 to 154 (DHKHEAQQPEVVDFKSMNSKNTRG) is disordered.

Belongs to the universal ribosomal protein uL13 family. In terms of assembly, part of the 50S ribosomal subunit.

Functionally, this protein is one of the early assembly proteins of the 50S ribosomal subunit, although it is not seen to bind rRNA by itself. It is important during the early stages of 50S assembly. The protein is Large ribosomal subunit protein uL13 of Maricaulis maris (strain MCS10) (Caulobacter maris).